The chain runs to 581 residues: Trehalase (581 aa).

The protein belongs to the glycosyl hydrolase 15 family. Monomer.

The enzyme catalyses alpha,alpha-trehalose + H2O = alpha-D-glucose + beta-D-glucose. It participates in glycan degradation; trehalose degradation; D-glucose from alpha,alpha-trehalose: step 1/1. Its activity is regulated as follows. Inhibited by validamycin A. Functionally, catalyzes the hydrolysis of alpha,alpha-trehalose into two molecules of D-glucose. The chain is Trehalase from Thermoplasma acidophilum (strain ATCC 25905 / DSM 1728 / JCM 9062 / NBRC 15155 / AMRC-C165).